Here is a 131-residue protein sequence, read N- to C-terminus: Single-stranded DNA-binding protein 2 (131 aa).

The region spanning 1–103 is the SSB domain; the sequence is MYNKVIMIGR…VLASSFQLLE (103 aa). The Important for interaction with partner proteins motif lies at 126–131; it reads EEELPF.

In terms of assembly, homotetramer.

Plays an important role in DNA replication, recombination and repair. Binds to ssDNA and to an array of partner proteins to recruit them to their sites of action during DNA metabolism. In Streptococcus agalactiae serotype III (strain NEM316), this protein is Single-stranded DNA-binding protein 2 (ssb2).